The chain runs to 240 residues: Uridylate kinase (240 aa).

An ATP-binding site is contributed by 13–16; sequence KLSG. The interval 21–26 is involved in allosteric activation by GTP; sequence GDKGFG. G55 lines the UMP pocket. Positions 56 and 60 each coordinate ATP. UMP is bound by residues D75 and 136–143; that span reads IGNPYFST. The ATP site is built by N164, Y170, and D173.

This sequence belongs to the UMP kinase family. In terms of assembly, homohexamer.

The protein resides in the cytoplasm. It carries out the reaction UMP + ATP = UDP + ADP. The protein operates within pyrimidine metabolism; CTP biosynthesis via de novo pathway; UDP from UMP (UMPK route): step 1/1. With respect to regulation, allosterically activated by GTP. Inhibited by UTP. Functionally, catalyzes the reversible phosphorylation of UMP to UDP. In Staphylococcus haemolyticus (strain JCSC1435), this protein is Uridylate kinase.